A 210-amino-acid polypeptide reads, in one-letter code: Large ribosomal subunit protein bL25 (210 aa).

It belongs to the bacterial ribosomal protein bL25 family. CTC subfamily. Part of the 50S ribosomal subunit; part of the 5S rRNA/L5/L18/L25 subcomplex. Contacts the 5S rRNA. Binds to the 5S rRNA independently of L5 and L18.

In terms of biological role, this is one of the proteins that binds to the 5S RNA in the ribosome where it forms part of the central protuberance. In Saccharophagus degradans (strain 2-40 / ATCC 43961 / DSM 17024), this protein is Large ribosomal subunit protein bL25.